The chain runs to 358 residues: 3-dehydroquinate synthase (358 aa).

Residues 104 to 108, 128 to 129, Lys140, Lys149, and 167 to 170 contribute to the NAD(+) site; these read GVIGD, TT, and FLNT. Zn(2+) contacts are provided by Glu182, His246, and His260.

This sequence belongs to the sugar phosphate cyclases superfamily. Dehydroquinate synthase family. Co(2+) serves as cofactor. It depends on Zn(2+) as a cofactor. NAD(+) is required as a cofactor.

Its subcellular location is the cytoplasm. It catalyses the reaction 7-phospho-2-dehydro-3-deoxy-D-arabino-heptonate = 3-dehydroquinate + phosphate. It participates in metabolic intermediate biosynthesis; chorismate biosynthesis; chorismate from D-erythrose 4-phosphate and phosphoenolpyruvate: step 2/7. Its function is as follows. Catalyzes the conversion of 3-deoxy-D-arabino-heptulosonate 7-phosphate (DAHP) to dehydroquinate (DHQ). The chain is 3-dehydroquinate synthase from Staphylococcus carnosus (strain TM300).